The following is a 988-amino-acid chain: Transposase for transposon Tn501 (988 aa).

This sequence belongs to the transposase 7 family.

In terms of biological role, required for transposition of transposon Tn501. This chain is Transposase for transposon Tn501 (tnpA), found in Pseudomonas aeruginosa.